The sequence spans 37 residues: Bactericidin B-2 (37 aa).

G37 is modified (glycine amide).

The protein belongs to the cecropin family.

It is found in the secreted. Its function is as follows. Cecropins have lytic and antibacterial activity against several Gram-positive and Gram-negative bacteria. This Manduca sexta (Tobacco hawkmoth) protein is Bactericidin B-2.